The chain runs to 454 residues: Alkaline extracellular protease (454 aa).

The signal sequence occupies residues Met1–Ala15. A propeptide spanning residues Ala16 to Arg157 is cleaved from the precursor. The 79-residue stretch at Phe68–Leu146 folds into the Inhibitor I9 domain. Asn123 carries N-linked (GlcNAc...) asparagine glycosylation. Positions Gln166–Ile454 constitute a Peptidase S8 domain. Residues Asp200, His231, and Ser397 each act as charge relay system in the active site.

This sequence belongs to the peptidase S8 family. The pro-region is removed through cleavage by XPR6 after Lys156-Arg157, which yields mature active XPR2. Post-translationally, the 10 consecutive -X-Ala- or -X-Pro- dipeptides located over 100 amino acids upstream of the N-terminal of mature XPR2 are subject to dipeptidyl aminopeptidase (DPAPase)-processing. DPAPase activity is not necessary for XPR6 cleavage and for secretion of mature active XPR2. In terms of processing, N-glycosylated. Glycosylation within the pro-region has no effect on secretion and maturation at 18 degrees Celsius, but is required for secretion at 28 degrees Celsius.

The protein localises to the secreted. It catalyses the reaction Hydrolysis of proteins with broad specificity for peptide bonds, and a preference for a large uncharged residue in P1. Hydrolyzes peptide amides.. The protease activity is completely inhibited by the serine inhibitor PMSF but is not affected by thiol group inhibitors and in the presence of dithiothreitol. In the presence of high concentrations of o-phenanthroline the protease activity is only partially inhibited. The pro-region plays an inhibitory role and may provide a mechanism for preventing premature activation in the secretory pathway. Major secreted protein that belongs to the subtilisin family serine proteases. This Yarrowia lipolytica (strain CLIB 122 / E 150) (Yeast) protein is Alkaline extracellular protease.